Reading from the N-terminus, the 495-residue chain is Cyclic GMP-AMP synthase (495 aa).

A disordered region spans residues 1-128 (MAARRGKSTR…AGATELAAPA (128 aa)). Residues 1-134 (MAARRGKSTR…AAPARMEAPP (134 aa)) are DNA-binding. The residue at position 7 (Lys-7) is an N6-acetyllysine. Position 13 is a phosphoserine (Ser-13). Basic and acidic residues-rich tracts occupy residues 52-76 (CRRE…RAED) and 105-116 (RAREARSARELR). Lys-56 bears the N6-acetyllysine mark. Residue Ser-57 is modified to Phosphoserine. The segment at 57–68 (SGPDPREKPQVR) is required for association with the cell membrane. Positions 103 to 134 (SCRAREARSARELRPQAGATELAAPARMEAPP) are required for activation upon DNA viral infection. A Nuclear export signal motif is present at residues 143-148 (LEKVRL). At Lys-145 the chain carries N6-lactoyllysine. The DNA-binding stretch occupies residues 147–190 (RLSRHEISEAAEVVNWVVEHLLRRLQGGESEFKGVALLRTGSYY). Residue Glu-165 is modified to PolyADP-ribosyl glutamic acid. GTP is bound at residue Thr-186. Phosphoserine is present on Ser-188. Ser-188 is a binding site for ATP. At Tyr-190 the chain carries Phosphotyrosine. Mg(2+) is bound by residues Glu-200 and Asp-202. Asp-202 contacts 2',3'-cGAMP. A Glycyl lysine isopeptide (Lys-Gly) (interchain with G-Cter in SUMO) cross-link involves residue Lys-206. Residue Lys-260 forms a Glycyl lysine isopeptide (Lys-Gly) (interchain with G-Cter in ubiquitin) linkage. At Glu-261 the chain carries 5-glutamyl polyglutamate. The Nuclear localization signal signature appears at 268 to 278 (GVTVERKRRGS). Residue Ser-278 is modified to Phosphoserine. Asp-294 is a binding site for GTP. Asp-294 lines the Mg(2+) pocket. Asp-294 serves as a coordination point for 2',3'-cGAMP. The segment at 316-357 (SQWLGAKVKNNLKRQPFYLVPKHAKEGSGFQEETWRLSFSHI) is interaction with collided ribosomes. A Glycyl lysine isopeptide (Lys-Gly) (interchain with G-Cter in SUMO); alternate cross-link involves residue Lys-322. Lys-322 is covalently cross-linked (Glycyl lysine isopeptide (Lys-Gly) (interchain with G-Cter in ubiquitin); alternate). Lys-337 and Arg-351 together coordinate 2',3'-cGAMP. 351–358 (RLSFSHIE) is a binding site for GTP. Residue Glu-358 participates in ATP binding. Lys-359 carries the post-translational modification N6-acetyllysine. Lys-359 participates in a covalent cross-link: Glycyl lysine isopeptide (Lys-Gly) (interchain with G-Cter in SUMO); alternate. A Glycyl lysine isopeptide (Lys-Gly) (interchain with G-Cter in ubiquitin); alternate cross-link involves residue Lys-359. The DNA-binding stretch occupies residues 359-382 (KDILKNHGQSKTCCEIDGVKCCRK). His-365 is a Zn(2+) binding site. Lys-369 carries the post-translational modification N6-acetyllysine. Lys-369 is covalently cross-linked (Glycyl lysine isopeptide (Lys-Gly) (interchain with G-Cter in SUMO)). Residues Cys-371, Cys-372, and Cys-379 each coordinate Zn(2+). Residues Cys-379 and Cys-380 are each lipidated (S-palmitoyl cysteine). Residues Lys-386, Lys-389, Lys-396, and Lys-397 each participate in a glycyl lysine isopeptide (Lys-Gly) (interchain with G-Cter in ubiquitin) cross-link. Residue Lys-389 is modified to N6-acetyllysine. Residue Lys-389 coordinates ATP. Ser-410 bears the Phosphoserine mark. 410–414 (SYHVK) contacts ATP. Cys-449 carries the S-palmitoyl cysteine lipid modification. The residue at position 481 (Lys-481) is an N6-methyllysine.

This sequence belongs to the mab-21 family. Monomer in the absence of DNA. Homodimer in presence of dsDNA: forms a 2:2 dimer with two enzymes binding to two DNA molecules. Interacts with nucleosomes; interaction is mainly mediated via histones H2A and H2B and inactivates the nucleotidyltransferase activity by blocking DNA-binding and subsequent activation. Interacts with PQBP1 (via WW domain). Interacts with TRIM14; this interaction recruits USP14, leading to deubiquitinate and stabilize CGAS and promote type I interferon production. Interacts with ZCCHC3; promoting sensing of dsDNA by CGAS. Interacts (when not monomethylated) with (poly-ADP-ribosylated) PARP1; interaction takes place in the nucleus and prevents the formation of the PARP1-TIMELESS complex. Interacts (when monomethylated) with SGF29; interaction with SGF29 prevents interaction with PARP1. Interacts with PCBP2; preventing the formation of liquid-like droplets in which CGAS is activated. Interacts with IRGM; promoting CGAS degradation. It depends on Mg(2+) as a cofactor. The cofactor is Mn(2+). Zn(2+) serves as cofactor. The N-terminal disordered part (1-134) is phosphorylated by AURKB during the G2-M transition, blocking CGAS liquid phase separation and preventing activation. Phosphorylation at Tyr-190 by BLK promotes cytosolic retention. Localizes into the nucleus following dephosphorylation at Tyr-190. Phosphorylation at Ser-410 activates the nucleotidyltransferase activity. Dephosphorylation at Ser-410 by PPP6C impairs its ability to bind GTP, thereby inactivating it. Phosphorylation at Ser-188 by PRKDC inhibits its cyclic GMP-AMP synthase activity by impairing homodimerization and activation. Phosphorylation at Ser-278 by AKT (AKT1, AKT2 or AKT3) suppresses the nucleotidyltransferase activity. Phosphorylation at Ser-278 by CDK1 during mitosis leads to its inhibition, thereby preventing CGAS activation by self-DNA during mitosis. Dephosphorylated at Ser-278 by protein phosphatase PP1 upon mitotic exit. Post-translationally, ubiquitinated at Lys-389 via 'Lys-48'-linked polyubiquitin chains, leading to its SQSTM1-mediated autophagic degradation. Interaction with TRIM14 promotes recruitment of USP14, leading to deubiquitinate Lys-389 and stabilize CGAS. Ubiquitinated at Lys-359 by RNF185 via 'Lys-27'-linked polyubiquitination, promoting CGAS cyclic GMP-AMP synthase activity. Monoubiquitination at Lys-322 by TRIM56 promotes oligomerization and subsequent activation. Monoubiquitination by TRIM41 promotes CGAS activation. Ubiquitination at Lys-260 via 'Lys-48'-linked polyubiquitination promotes its degradation. Deubiquitination at Lys-260 by USP29 promotes its stabilization. Deubiquitinated by USP27X, promoting its stabilization. Ubiquitinated at Lys-386 via 'Lys-63'-linked polyubiquitin chains by MARCHF8, leading to the inhibition of its DNA binding ability. In cycling cells, nucleosome-bound CGAS is ubiquitinated at Lys-396 and Lys-397 via 'Lys-48'-linked polyubiquitin chains by the ECS(SPSB3) complex, leading to its degradation: ubiquitination and degradation of nuclear CGAS during G1 and G2 phases is required to promote low intranuclear CGAS abundance before the next mitotic cycle. In terms of processing, sumoylated at Lys-206 by TRIM38 in uninfected cells and during the early phase of viral infection, promoting its stability by preventing ubiquitination at Lys-260 and subsequent degradation. Desumoylated by SENP2 during the late phase of viral infection. Sumoylation at Lys-322, Lys-359 and Lys-369 prevents DNA-binding, oligomerization and nucleotidyltransferase activity. Desumoylation at Lys-322, Lys-359 and Lys-369 by SENP7 relieves inhibition and activates CGAS. Polyglutamylated by TTLL6 at Glu-261, leading to impair DNA-binding activity. Deglutamylated by AGBL5/CCP5 and AGBL6/CCP6. Post-translationally, acetylation at Lys-359, Lys-369 and Lys-389 inhibits the cyclic GMP-AMP synthase activity. Deacetylated upon cytosolic DNA challenge such as viral infections. Acetylation by KAT5 increases the cyclic GMP-AMP synthase activity by promoting DNA-binding and subsequent activation. In terms of processing, proteolytically cleaved by apoptotic caspases during apoptosis, leading to its inactivation. The damage of the nucleus and the mitochondria during apoptosis leads to leakage of nuclear and mitochondrial DNA, which activate CGAS: cleavage and inactivation during apoptosis in required to prevent cytokine overproduction. Cleaved by CASP7 and CASP3 during virus-induced apoptosis, thereby inactivating it and preventing cytokine overproduction. Cleaved by CASP1 upon DNA virus infection; the cleavage impairs cGAMP production. Also cleaved by the pyroptotic CASP4 during non-canonical inflammasome activation; does not cut at the same sites than CASP1. Degraded via selective autophagy following interaction with IRGM. IRGM promotes CGAS recruitment to autophagosome membranes, promoting its SQSTM1/p62-dependent autophagic degradation. Post-translationally, poly-ADP-ribosylation at Glu-165 by PARP1 impairs DNA-binding, thereby preventing the cyclic GMP-AMP synthase activity. In terms of processing, palmitoylation at Cys-449 by ZDHHC18 impairs DNA-binding, thereby preventing the cyclic GMP-AMP synthase activity. Palmitoylation at Cys-379 and Cys-380 by ZDHHC9 promotes homodimerization and cyclic GMP-AMP synthase activity. Depalmitoylation at Cys-379 and Cys-380 by LYPLAL1 impairs homodimerization and cyclic GMP-AMP synthase activity. Monomethylated at Lys-481 by SETD7. Monomethylation promotes interaction with SGF29, preventing interaction between PARP1 nad SGF29. Demethylation by RIOX1 promotes interaction with PARP1, followed by PARP1 inactivation. Post-translationally, lactylation by AARS2 prevents ability to undergo liquid-liquid phase separation (LLPS), thereby inhibiting CGAS activation.

Its subcellular location is the nucleus. It is found in the chromosome. The protein resides in the cell membrane. The protein localises to the cytoplasm. It localises to the cytosol. The catalysed reaction is GTP + ATP = 2',3'-cGAMP + 2 diphosphate. The enzyme catalyses GTP + ATP = pppGp(2'-5')A + diphosphate. It carries out the reaction pppGp(2'-5')A = 2',3'-cGAMP + diphosphate. The enzyme activity is strongly increased by double-stranded DNA (dsDNA), but not by single-stranded DNA or RNA. DNA-binding induces the formation of liquid-like droplets in which CGAS is activated. Liquid-like droplets also create a selective environment that restricts entry of negative regulators, such as TREX1 or BANF1/BAF, allowing sensing of DNA. A number of mechanisms exist to restrict its activity toward self-DNA. The nucleotidyltransferase activity is inhibited in the nucleus via its association with nucleosomes: interacts with the acidic patch of histones H2A and H2B, thereby blocking DNA-binding and subsequent activation. CGAS is also inactive when associated with mitotic chromatin. Chromatin-bound CGAS cannot be activated by exogenous DNA in mitotic cells: phosphorylation of the N-terminal disordered part by AURKB during the G2-M transition blocks CGAS liquid phase separation and activation. Activity toward self-DNA is inhibited by BANF1/BAF upon acute loss of nuclear membrane integrity: BANF1/BAF acts by outcompeting CGAS for DNA-binding, thereby preventing CGAS activation. DNA-induced activation at micronuclei is also limited by TREX1, which degrades micronuclear DNA upon nuclear envelope rupture, thereby preventing CGAS activation. CGAS can be released from nucleosomes and activated by MRE11 component of the MRN complex, which displaces CGAS from acidic-patch-mediated sequestration. Acetylation at Lys-359, Lys-369 and Lys-389 inhibits the cyclic GMP-AMP synthase activity. Acetylation by KAT5 increases the cyclic GMP-AMP synthase activity by promoting DNA-binding and subsequent activation. Phosphorylation at Ser-278 suppresses the nucleotidyltransferase activity. Phosphorylation at Ser-410 promotes the cyclic GMP-AMP synthase activity. Phosphorylation at Ser-188 inhibits its cyclic GMP-AMP synthase activity. Ubiquitination at Lys-359 via 'Lys-27'-linked polyubiquitination enhances the cyclic GMP-AMP synthase activity. Monoubiquitination at Lys-322 promotes oligomerization and subsequent activation. Sumoylation at Lys-322, Lys-359 and Lys-369 prevents DNA-binding, oligomerization and nucleotidyltransferase activity. The enzyme activity is impaired by the cleavage by CASP1. In addition to DNA, also activated by collided ribosomes upon translation stress: specifically binds collided ribosomes, promoting its activation and triggering type-I interferon production. Functionally, nucleotidyltransferase that catalyzes the formation of cyclic GMP-AMP (2',3'-cGAMP) from ATP and GTP and plays a key role in innate immunity. Catalysis involves both the formation of a 2',5' phosphodiester linkage at the GpA step and the formation of a 3',5' phosphodiester linkage at the ApG step, producing c[G(2',5')pA(3',5')p]. Acts as a key DNA sensor: directly binds double-stranded DNA (dsDNA), inducing the formation of liquid-like droplets in which CGAS is activated, leading to synthesis of 2',3'-cGAMP, a second messenger that binds to and activates STING1, thereby triggering type-I interferon production. Preferentially binds long dsDNA (around 45 bp) and forms ladder-like networks that function cooperatively to stabilize individual cGAS-dsDNA complexes. Acts as a key foreign DNA sensor, the presence of double-stranded DNA (dsDNA) in the cytoplasm being a danger signal that triggers the immune responses. Has antiviral activity by sensing the presence of dsDNA from DNA viruses in the cytoplasm. Also acts as an innate immune sensor of infection by retroviruses by detecting the presence of reverse-transcribed DNA in the cytosol. Detection of retroviral reverse-transcribed DNA in the cytosol may be indirect and be mediated via interaction with PQBP1, which directly binds reverse-transcribed retroviral DNA. Also detects the presence of DNA from bacteria. 2',3'-cGAMP can be transferred from producing cells to neighboring cells through gap junctions, leading to promote STING1 activation and convey immune response to connecting cells. 2',3'-cGAMP can also be transferred between cells by virtue of packaging within viral particles contributing to IFN-induction in newly infected cells in a cGAS-independent but STING1-dependent manner. Also senses the presence of neutrophil extracellular traps (NETs) that are translocated to the cytosol following phagocytosis, leading to synthesis of 2',3'-cGAMP. In addition to foreign DNA, can also be activated by endogenous nuclear or mitochondrial DNA. When self-DNA leaks into the cytosol during cellular stress (such as mitochondrial stress, DNA damage, mitotic arrest or senescence), or is present in form of cytosolic micronuclei, CGAS is activated leading to a state of sterile inflammation. Acts as a regulator of cellular senescence by binding to cytosolic chromatin fragments that are present in senescent cells, leading to trigger type-I interferon production via STING1 and promote cellular senescence. Also involved in the inflammatory response to genome instability and double-stranded DNA breaks: acts by localizing to micronuclei arising from genome instability. Micronuclei, which are frequently found in cancer cells, consist of chromatin surrounded by their own nuclear membrane: following breakdown of the micronuclear envelope, a process associated with chromothripsis, CGAS binds self-DNA exposed to the cytosol, leading to 2',3'-cGAMP synthesis and subsequent activation of STING1 and type-I interferon production. In a healthy cell, CGAS is however kept inactive even in cellular events that directly expose it to self-DNA, such as mitosis, when cGAS associates with chromatin directly after nuclear envelope breakdown or remains in the form of postmitotic persistent nuclear cGAS pools bound to chromatin. Nuclear CGAS is inactivated by chromatin via direct interaction with nucleosomes, which block CGAS from DNA binding and thus prevent CGAS-induced autoimmunity. Also acts as a suppressor of DNA repair in response to DNA damage: inhibits homologous recombination repair by interacting with PARP1, the CGAS-PARP1 interaction leading to impede the formation of the PARP1-TIMELESS complex. In addition to DNA, also sense translation stress: in response to translation stress, translocates to the cytosol and associates with collided ribosomes, promoting its activation and triggering type-I interferon production. The polypeptide is Cyclic GMP-AMP synthase (Sus scrofa (Pig)).